Consider the following 274-residue polypeptide: MLTPMVAGGVVFPGLFLLSKNTLQRLPQLRWEEADAVIVSARLVSSVQAIMASTAGYIVSTSCKHIIDDQHWLSSAYTQFAVPYFIYDIYAMFLCHWHKHQVKGHGGDDGAARAPGSTWAIARGYLHKEFLMVLHHAAMVLVCFPLSVVWRQGKGDFFLGCMLMAEVSTPFVCLGKILIQYKQQHTLLHKVNGALMLLSFLCCRVLLFPYLYWAYGRHAGLPLLAVPLAIPAHVNLGAALLLAPQLYWFFLICRGACRLFWPRSRPPPACQAQD.

Positions A34–W261 constitute a TLC domain. The next 4 membrane-spanning stretches (helical) occupy residues F130–W150, L159–I179, A194–A214, and L223–A243.

In terms of tissue distribution, expressed in testis. Expressed in the retina with higher expression levels in the macular than in the peripheral region.

Its subcellular location is the golgi apparatus membrane. The protein resides in the endoplasmic reticulum membrane. It carries out the reaction sphing-4-enine + octadecanoyl-CoA = N-octadecanoylsphing-4-enine + CoA + H(+). The enzyme catalyses eicosanoyl-CoA + sphing-4-enine = N-eicosanoyl-sphing-4-enine + CoA + H(+). The catalysed reaction is sphing-4-enine + hexadecanoyl-CoA = N-hexadecanoylsphing-4-enine + CoA + H(+). Functionally, involved in ceramide synthesis. The chain is Ceramide synthase from Homo sapiens (Human).